The primary structure comprises 146 residues: MRAVVQRVKSARVKVNGKSVGAINKGLLVLLGVAPEDTSKEVEYLAKKIVGLRIFEDDNGKMNLSLDEVGGEMLVVSQFTLYGDCRKGRRPSFVGAAPPELAEKLYEEFVNVVDLLGIKTETGKFGAMMDVSLVNQGPVTLIVESK.

The Gly-cisPro motif, important for rejection of L-amino acids signature appears at 137 to 138 (GP).

Belongs to the DTD family. In terms of assembly, homodimer.

The protein resides in the cytoplasm. It catalyses the reaction glycyl-tRNA(Ala) + H2O = tRNA(Ala) + glycine + H(+). It carries out the reaction a D-aminoacyl-tRNA + H2O = a tRNA + a D-alpha-amino acid + H(+). In terms of biological role, an aminoacyl-tRNA editing enzyme that deacylates mischarged D-aminoacyl-tRNAs. Also deacylates mischarged glycyl-tRNA(Ala), protecting cells against glycine mischarging by AlaRS. Acts via tRNA-based rather than protein-based catalysis; rejects L-amino acids rather than detecting D-amino acids in the active site. By recycling D-aminoacyl-tRNA to D-amino acids and free tRNA molecules, this enzyme counteracts the toxicity associated with the formation of D-aminoacyl-tRNA entities in vivo and helps enforce protein L-homochirality. The polypeptide is D-aminoacyl-tRNA deacylase (Desulfatibacillum aliphaticivorans).